We begin with the raw amino-acid sequence, 318 residues long: Methionyl-tRNA formyltransferase (318 aa).

Ser-120 to Pro-123 contacts (6S)-5,6,7,8-tetrahydrofolate.

The protein belongs to the Fmt family.

The enzyme catalyses L-methionyl-tRNA(fMet) + (6R)-10-formyltetrahydrofolate = N-formyl-L-methionyl-tRNA(fMet) + (6S)-5,6,7,8-tetrahydrofolate + H(+). Its function is as follows. Attaches a formyl group to the free amino group of methionyl-tRNA(fMet). The formyl group appears to play a dual role in the initiator identity of N-formylmethionyl-tRNA by promoting its recognition by IF2 and preventing the misappropriation of this tRNA by the elongation apparatus. In Variovorax paradoxus (strain S110), this protein is Methionyl-tRNA formyltransferase.